The sequence spans 614 residues: Acetylcholinesterase (614 aa).

The N-terminal stretch at 1–31 (MRPPQCLLHTPSLASPLLLLLLWLLGGGVGA) is a signal peptide. Cys100 and Cys127 are oxidised to a cystine. Trp117 contacts galanthamine. Trp117 lines the huperzine A pocket. Gly153 serves as a coordination point for huprine W. Tyr164 is a binding site for huperzine A. Galanthamine is bound at residue 233-234 (ES). Ser234 provides a ligand contact to huprine W. Residue Ser234 is the Acyl-ester intermediate of the active site. The cysteines at positions 288 and 303 are disulfide-linked. A glycan (N-linked (GlcNAc...) asparagine) is linked at Asn296. Glu365 serves as the catalytic Charge relay system. Residue Tyr368 participates in galanthamine binding. Residue Tyr368 coordinates huperzine A. Residue Asn381 is glycosylated (N-linked (GlcNAc...) asparagine). A disulfide bridge connects residues Cys440 and Cys560. Huprine W is bound by residues Trp470 and His478. His478 serves as the catalytic Charge relay system. Asn495 is a glycosylation site (N-linked (GlcNAc...) asparagine). Phe588 carries the GPI-anchor amidated glycine lipid modification.

It belongs to the type-B carboxylesterase/lipase family. As to quaternary structure, interacts with PRIMA1. The interaction with PRIMA1 is required to anchor it to the basal lamina of cells and organize into tetramers. Isoform H generates GPI-anchored dimers; disulfide linked. Isoform T generates multiple structures, ranging from monomers and dimers to collagen-tailed and hydrophobic-tailed forms, in which catalytic tetramers are associated with anchoring proteins that attach them to the basal lamina or to cell membranes. In the collagen-tailed forms, isoform T subunits are associated with a specific collagen, COLQ, which triggers the formation of isoform T tetramers, from monomers and dimers. Isoform R may be monomeric. In terms of tissue distribution, isoform H is highly expressed in erythrocytes.

It is found in the synapse. The protein resides in the secreted. The protein localises to the cell membrane. It localises to the nucleus. It catalyses the reaction acetylcholine + H2O = choline + acetate + H(+). Hydrolyzes rapidly the acetylcholine neurotransmitter released into the synaptic cleft allowing to terminate the signal transduction at the neuromuscular junction. Role in neuronal apoptosis. The sequence is that of Acetylcholinesterase from Homo sapiens (Human).